The following is a 37-amino-acid chain: Large ribosomal subunit protein bL36 (37 aa).

The protein belongs to the bacterial ribosomal protein bL36 family.

This is Large ribosomal subunit protein bL36 from Solidesulfovibrio magneticus (strain ATCC 700980 / DSM 13731 / RS-1) (Desulfovibrio magneticus).